Reading from the N-terminus, the 255-residue chain is Triosephosphate isomerase (255 aa).

Residue 10–12 participates in substrate binding; sequence NWK. Histidine 96 (electrophile) is an active-site residue. Glutamate 168 (proton acceptor) is an active-site residue. Residues glycine 174, serine 213, and 234 to 235 contribute to the substrate site; that span reads GG.

It belongs to the triosephosphate isomerase family. Homodimer.

It localises to the cytoplasm. The catalysed reaction is D-glyceraldehyde 3-phosphate = dihydroxyacetone phosphate. Its pathway is carbohydrate biosynthesis; gluconeogenesis. It participates in carbohydrate degradation; glycolysis; D-glyceraldehyde 3-phosphate from glycerone phosphate: step 1/1. Functionally, involved in the gluconeogenesis. Catalyzes stereospecifically the conversion of dihydroxyacetone phosphate (DHAP) to D-glyceraldehyde-3-phosphate (G3P). The protein is Triosephosphate isomerase of Histophilus somni (strain 2336) (Haemophilus somnus).